A 421-amino-acid polypeptide reads, in one-letter code: TITAN-like protein (421 aa).

A C2H2-type 1; degenerate zinc finger spans residues 11-32 (EFCTVCRFHHDQGSRHKYFPRH). The C2H2-type 2; degenerate zinc finger occupies 70 to 100 (VWCVFCDEDIVELGSSFACSKAINHFASSDH). The interval 279–306 (ISSSHSTDAGGNVHSGAPPPWLDANDGD) is disordered. Short sequence motifs (nuclear localization signal) lie at residues 328-335 (NRKLNPNR) and 377-384 (TRKESRKE). The tract at residues 376 to 421 (GTRKESRKEFEKEKRKLVKTESISTESEPVKIQPYISKRARRESGE) is disordered. The segment covering 377-389 (TRKESRKEFEKEK) has biased composition (basic and acidic residues).

As to expression, also present in cotyledons, hypocotyls, stems, veins of sepals and stigmas, and actively dividing tissues such as shoot apical meristem, root tips and emerging true leaves. Weak expression in petals and anthers, and not detected in mature leaves. In seeds, expressed in both the endosperm and embryo.

Its subcellular location is the nucleus. Functionally, key regulator for endosperm and embryo nuclear divisions. The protein is TITAN-like protein of Arabidopsis thaliana (Mouse-ear cress).